We begin with the raw amino-acid sequence, 453 residues long: Glutamate-rich protein 5 (453 aa).

3 disordered regions span residues 1–38 (MGCS…ALGR), 66–377 (NGVQ…EHPA), and 394–453 (TNEE…HSML). Residues 11-21 (AGDDNRLRSAT) show a composition bias toward basic and acidic residues. Residue S155 is modified to Phosphoserine. 2 stretches are compositionally biased toward polar residues: residues 230-243 (LQET…SQPL) and 271-283 (QETL…SQLR). Composition is skewed to basic and acidic residues over residues 305 to 332 (EEEK…EHGG), 364 to 374 (IQPERTVESME), and 394 to 403 (TNEEDQHIEG). Positions 404 to 413 (ETGETVETEM) are enriched in acidic residues. Positions 414-424 (ESEKVSEGAET) are enriched in basic and acidic residues.

This Bos taurus (Bovine) protein is Glutamate-rich protein 5 (ERICH5).